We begin with the raw amino-acid sequence, 275 residues long: Diaminopimelate epimerase (275 aa).

Substrate-binding residues include asparagine 13, glutamine 46, and asparagine 66. Cysteine 75 functions as the Proton donor in the catalytic mechanism. Substrate is bound by residues 76–77 (GN), asparagine 159, asparagine 192, and 210–211 (ER). Residue cysteine 219 is the Proton acceptor of the active site. 220-221 (GT) is a binding site for substrate.

The protein belongs to the diaminopimelate epimerase family. In terms of assembly, homodimer.

Its subcellular location is the cytoplasm. The catalysed reaction is (2S,6S)-2,6-diaminopimelate = meso-2,6-diaminopimelate. The protein operates within amino-acid biosynthesis; L-lysine biosynthesis via DAP pathway; DL-2,6-diaminopimelate from LL-2,6-diaminopimelate: step 1/1. In terms of biological role, catalyzes the stereoinversion of LL-2,6-diaminopimelate (L,L-DAP) to meso-diaminopimelate (meso-DAP), a precursor of L-lysine and an essential component of the bacterial peptidoglycan. This chain is Diaminopimelate epimerase, found in Psychromonas ingrahamii (strain DSM 17664 / CCUG 51855 / 37).